We begin with the raw amino-acid sequence, 82 residues long: Sulfur carrier protein TusA (82 aa).

The active-site Cysteine persulfide intermediate is Cys19.

This sequence belongs to the sulfur carrier protein TusA family.

The protein localises to the cytoplasm. Sulfur carrier protein which probably makes part of a sulfur-relay system. In Vibrio campbellii (strain ATCC BAA-1116), this protein is Sulfur carrier protein TusA.